Consider the following 35-residue polypeptide: Dermonecrotic toxin LdSicTox-alpha-1 (35 aa).

Residue His11 is part of the active site. Positions 31 and 33 each coordinate Mg(2+).

The protein belongs to the arthropod phospholipase D family. Class I subfamily. It depends on Mg(2+) as a cofactor. Post-translationally, contains 1 disulfide bond. Expressed by the venom gland.

The protein resides in the secreted. The catalysed reaction is an N-(acyl)-sphingosylphosphocholine = an N-(acyl)-sphingosyl-1,3-cyclic phosphate + choline. The enzyme catalyses an N-(acyl)-sphingosylphosphoethanolamine = an N-(acyl)-sphingosyl-1,3-cyclic phosphate + ethanolamine. It catalyses the reaction a 1-acyl-sn-glycero-3-phosphocholine = a 1-acyl-sn-glycero-2,3-cyclic phosphate + choline. It carries out the reaction a 1-acyl-sn-glycero-3-phosphoethanolamine = a 1-acyl-sn-glycero-2,3-cyclic phosphate + ethanolamine. Dermonecrotic toxins cleave the phosphodiester linkage between the phosphate and headgroup of certain phospholipids (sphingolipid and lysolipid substrates), forming an alcohol (often choline) and a cyclic phosphate. This toxin acts on sphingomyelin (SM). It may also act on ceramide phosphoethanolamine (CPE), lysophosphatidylcholine (LPC) and lysophosphatidylethanolamine (LPE), but not on lysophosphatidylserine (LPS), and lysophosphatidylglycerol (LPG). It acts by transphosphatidylation, releasing exclusively cyclic phosphate products as second products. Induces dermonecrosis, hemolysis, increased vascular permeability, edema, inflammatory response, and platelet aggregation. This is Dermonecrotic toxin LdSicTox-alpha-1 from Loxosceles deserta (Desert recluse spider).